The following is a 466-amino-acid chain: UDP-N-acetylmuramate--L-alanine ligase (466 aa).

ATP is bound at residue 117–123; that stretch reads GTHGKTT.

The protein belongs to the MurCDEF family.

The protein localises to the cytoplasm. The catalysed reaction is UDP-N-acetyl-alpha-D-muramate + L-alanine + ATP = UDP-N-acetyl-alpha-D-muramoyl-L-alanine + ADP + phosphate + H(+). It functions in the pathway cell wall biogenesis; peptidoglycan biosynthesis. In terms of biological role, cell wall formation. This Streptomyces griseus subsp. griseus (strain JCM 4626 / CBS 651.72 / NBRC 13350 / KCC S-0626 / ISP 5235) protein is UDP-N-acetylmuramate--L-alanine ligase.